An 89-amino-acid chain; its full sequence is Large ribosomal subunit protein bL27 (89 aa).

Residues 1 to 21 (MAHKKAGGSSRNGRDSAGRRL) are disordered.

It belongs to the bacterial ribosomal protein bL27 family.

The sequence is that of Large ribosomal subunit protein bL27 from Novosphingobium aromaticivorans (strain ATCC 700278 / DSM 12444 / CCUG 56034 / CIP 105152 / NBRC 16084 / F199).